The following is a 473-amino-acid chain: H(+)/Cl(-) exchange transporter ClcA (473 aa).

The Cytoplasmic portion of the chain corresponds to 1-32 (MKTDTPSLETPQAARLRRRQLIRQLLERDKTP). Residues 33 to 69 (LAILFMAAVVGTLVGLAAVAFDKGVAWLQNQRMGALV) traverse the membrane as a helical segment. Residues 70–76 (HTADNYP) lie on the Periplasmic side of the membrane. Residues 77–100 (LLLTVAFLCSAVLAMFGYFLVRKY) form a helical membrane-spanning segment. The Selectivity filter part_1 motif lies at 106–110 (GSGIP). Chloride is bound at residue serine 107. The helical intramembrane region spans 109-116 (IPEIEGAL). Over 117–123 (EDQRPVR) the chain is Cytoplasmic. Helical transmembrane passes span 124 to 141 (WWRV…TLGG) and 148 to 166 (EGPT…LDIF). Positions 146–150 (GREGP) match the Selectivity filter part_2 motif. At 167–176 (RLKGDEARHT) the chain is on the cytoplasmic side. Intramembrane regions (helical) lie at residues 177-189 (LLAT…LAAA) and 193-201 (PLAGILFII). At 202 to 214 (EEMRPQFRYTLIS) the chain is on the cytoplasmic side. A helical membrane pass occupies residues 215-232 (IKAVFIGVIMSTIMYRIF). The Periplasmic segment spans residues 233 to 252 (NHEVALIDVGKLSDAPLNTL). The chain crosses the membrane as a helical span at residues 253-281 (WLYLILGIIFGIFGPIFNKWVLGMQDLLH). Over 282–287 (RVHGGN) the chain is Cytoplasmic. The helical transmembrane segment at 288 to 309 (ITKWILMGGAIGGLCGLLGFVA) threads the bilayer. Residues 310 to 329 (PATSGGGFNLIPIATAGNFS) lie on the Periplasmic side of the membrane. A run of 2 helical transmembrane segments spans residues 330–349 (MGML…LCFS) and 355–376 (GIFA…MVAV). A Selectivity filter part_3 motif is present at residues 355–359 (GIFAP). Chloride contacts are provided by isoleucine 356 and phenylalanine 357. Residues 377 to 386 (ELFPQYHLEA) are Periplasmic-facing. Residues 387–401 (GTFAIAGMGALLAAS) constitute an intramembrane region (helical). The note=Loop between two helices intramembrane region spans 402–404 (IRA). Residues 405–416 (PLTGIILVLEMT) constitute an intramembrane region (helical). The segment at residues 417-421 (DNYQL) is an intramembrane region (note=Loop between two helices). The chain crosses the membrane as a helical span at residues 422 to 438 (ILPMIITGLGATLLAQF). The Cytoplasmic segment spans residues 439-473 (TGGKPLYSAILARTLAKQEAEQLARSKAASASENT). Tyrosine 445 is a binding site for chloride.

It belongs to the chloride channel (TC 2.A.49) family. ClcA subfamily. In terms of assembly, homodimer.

The protein localises to the cell inner membrane. The catalysed reaction is 2 chloride(in) + H(+)(out) = 2 chloride(out) + H(+)(in). In terms of biological role, proton-coupled chloride transporter. Functions as antiport system and exchanges two chloride ions for 1 proton. Probably acts as an electrical shunt for an outwardly-directed proton pump that is linked to amino acid decarboxylation, as part of the extreme acid resistance (XAR) response. The polypeptide is H(+)/Cl(-) exchange transporter ClcA (Escherichia coli O9:H4 (strain HS)).